The chain runs to 185 residues: Elongation factor P (185 aa).

The protein belongs to the elongation factor P family.

The protein localises to the cytoplasm. Its pathway is protein biosynthesis; polypeptide chain elongation. Involved in peptide bond synthesis. Stimulates efficient translation and peptide-bond synthesis on native or reconstituted 70S ribosomes in vitro. Probably functions indirectly by altering the affinity of the ribosome for aminoacyl-tRNA, thus increasing their reactivity as acceptors for peptidyl transferase. This is Elongation factor P from Acetivibrio thermocellus (strain ATCC 27405 / DSM 1237 / JCM 9322 / NBRC 103400 / NCIMB 10682 / NRRL B-4536 / VPI 7372) (Clostridium thermocellum).